A 292-amino-acid polypeptide reads, in one-letter code: MFTGVGTAIVTPFSNGEVDYGSYEKLVRWQIESGVKAIVVAGTTGEGVTLTVEEREKLVALTKQICEGKAQVIVGTGTNDTRKTLELSLSAEKSGADALLIVTPYYNKPTQEGLYAHYKYLSERLSKPIIIYNVPSRTGVNISPETVARLASDCKNIVAIKEANTDVNQADEIYRLTNGDFYIYSGNDDRAFHMICAGAKGVISVASNIIPEQMVELANKTLQNDVVTARNIHFKYLELMKVLFVETNPIPVKAALNLLGIIKNELRLPLVPAKQSTVELLEKVMKKVGVLS.

Residue T44 participates in pyruvate binding. Catalysis depends on Y132, which acts as the Proton donor/acceptor. K161 serves as the catalytic Schiff-base intermediate with substrate. A pyruvate-binding site is contributed by I203.

Belongs to the DapA family. In terms of assembly, homotetramer; dimer of dimers.

It localises to the cytoplasm. The enzyme catalyses L-aspartate 4-semialdehyde + pyruvate = (2S,4S)-4-hydroxy-2,3,4,5-tetrahydrodipicolinate + H2O + H(+). The protein operates within amino-acid biosynthesis; L-lysine biosynthesis via DAP pathway; (S)-tetrahydrodipicolinate from L-aspartate: step 3/4. In terms of biological role, catalyzes the condensation of (S)-aspartate-beta-semialdehyde [(S)-ASA] and pyruvate to 4-hydroxy-tetrahydrodipicolinate (HTPA). The chain is 4-hydroxy-tetrahydrodipicolinate synthase from Fervidobacterium nodosum (strain ATCC 35602 / DSM 5306 / Rt17-B1).